A 378-amino-acid polypeptide reads, in one-letter code: Cytochrome b (378 aa).

4 helical membrane passes run 34 to 54 (FGSL…FLAM), 78 to 99 (WFLR…FMHV), 114 to 134 (WNTG…GYVL), and 179 to 199 (FFTF…IHLL). Residues His84 and His98 each coordinate heme b. Heme b contacts are provided by His183 and His197. An a ubiquinone-binding site is contributed by His202. Transmembrane regions (helical) follow at residues 227–247 (YKDI…IWKF), 289–309 (LGGV…PFTH), 321–341 (LNQI…WIGA), and 348–368 (YVLT…INPL).

This sequence belongs to the cytochrome b family. As to quaternary structure, the main subunits of complex b-c1 are: cytochrome b, cytochrome c1 and the Rieske protein. Heme b is required as a cofactor.

Its subcellular location is the mitochondrion inner membrane. Component of the ubiquinol-cytochrome c reductase complex (complex III or cytochrome b-c1 complex) that is part of the mitochondrial respiratory chain. The b-c1 complex mediates electron transfer from ubiquinol to cytochrome c. Contributes to the generation of a proton gradient across the mitochondrial membrane that is then used for ATP synthesis. This Anopheles quadrimaculatus (Common malaria mosquito) protein is Cytochrome b (MT-CYB).